Here is a 428-residue protein sequence, read N- to C-terminus: MKVQRPKGTVDILPGESGSWEKVESIARNFFKRANYREIRTPSFENYEVFSRSSGETSDVVSKEMYDFNDKGGRHIALRPEGTAGVVRAYVENKLYGPDVVKPFSVYYIDNTFRYERPQAGRQREFHQIGVESFGSDSPLADVETLMMAHDLLAELGVKNYELHINSLGNAQVREAYHDALVNYFTPVKDQLSEDSQRRLSQNPLRILDSKDERDKKFLPNAPKIVDYLDDESRENFKTITDMLEQLGINYVMDDDLVRGLDYYTGIIFEFMVEDKNLWESATTILGGGRYNHLVEEFDGPETPAVGFGIGEERLMLVLKEQNPDLFQEEGIDFFITNIGAGTEFKAVEVARSLREQGFSAQYDVDQKKLKQQFRKADRVHATFVITLGAKELENGVLNIKRLSDGKTIDLSLEDINNMQDVINKLED.

It belongs to the class-II aminoacyl-tRNA synthetase family. Homodimer.

The protein localises to the cytoplasm. It catalyses the reaction tRNA(His) + L-histidine + ATP = L-histidyl-tRNA(His) + AMP + diphosphate + H(+). In Lactobacillus johnsonii (strain CNCM I-12250 / La1 / NCC 533), this protein is Histidine--tRNA ligase.